We begin with the raw amino-acid sequence, 334 residues long: MKTLGEFIIEKQAEYPEAKGELSGILASIRLAAKIIHREINRAGLSQDILGFAGSENVQGETQMKLDIFANETMKKALLAREDVAGFASEEDDNFIAFDSERNRNAKYILMTDPLDGSSNIDVNVSVGTIFSIYKRISPIGSPVTIEDFLQEGRKQVAAGYVTYGSSTMLVYTTGNGVNGFTYDPSLGLFILSHPDMKMPAEGKYYSINEGQYVTFPLGVKKFIKYCQENDEASKRPYSSRYIGSLVSDFHRNLLKGGIYIYPTSTVYPQGKLRLLYEGNPMAFLAEQADGMATDGFQPILDIKPTELHQRVPFFIGSKTMVKQANTFMQTFTE.

Residues Glu90, Asp113, Leu115, and Asp116 each coordinate Mg(2+). Substrate-binding positions include 116-119 (DGSS), Asn209, Tyr242, and Lys272. Glu278 provides a ligand contact to Mg(2+).

The protein belongs to the FBPase class 1 family. As to quaternary structure, homotetramer. The cofactor is Mg(2+).

The protein resides in the cytoplasm. It carries out the reaction beta-D-fructose 1,6-bisphosphate + H2O = beta-D-fructose 6-phosphate + phosphate. It functions in the pathway carbohydrate biosynthesis; gluconeogenesis. The protein is Fructose-1,6-bisphosphatase class 1 of Haemophilus ducreyi (strain 35000HP / ATCC 700724).